Reading from the N-terminus, the 252-residue chain is Small ribosomal subunit protein uS3 (252 aa).

The 72-residue stretch at 39–110 (IRKALMKELK…EVKINVVEIK (72 aa)) folds into the KH type-2 domain. Residues 218–252 (TSDEKPKFEKRDFNRSNNNRRDQAPKSHPVAKEAK) are disordered. A compositionally biased stretch (basic and acidic residues) spans 219 to 252 (SDEKPKFEKRDFNRSNNNRRDQAPKSHPVAKEAK).

It belongs to the universal ribosomal protein uS3 family. Part of the 30S ribosomal subunit. Forms a tight complex with proteins S10 and S14.

In terms of biological role, binds the lower part of the 30S subunit head. Binds mRNA in the 70S ribosome, positioning it for translation. This is Small ribosomal subunit protein uS3 from Spiroplasma citri.